The primary structure comprises 116 residues: Ribosome-binding factor A (116 aa).

This sequence belongs to the RbfA family. In terms of assembly, monomer. Binds 30S ribosomal subunits, but not 50S ribosomal subunits or 70S ribosomes.

Its subcellular location is the cytoplasm. In terms of biological role, one of several proteins that assist in the late maturation steps of the functional core of the 30S ribosomal subunit. Associates with free 30S ribosomal subunits (but not with 30S subunits that are part of 70S ribosomes or polysomes). Required for efficient processing of 16S rRNA. May interact with the 5'-terminal helix region of 16S rRNA. The chain is Ribosome-binding factor A from Streptococcus agalactiae.